Reading from the N-terminus, the 108-residue chain is Cytochrome c-555 (108 aa).

The signal sequence occupies residues 1–22; it reads MSRFVSAALVGAALLVSGNAFA. Residues cysteine 36, cysteine 39, histidine 40, and methionine 82 each coordinate heme c.

Post-translationally, binds 1 heme c group covalently per subunit.

This basic c-type monoheme cytochrome has been found exclusively in the green photosynthetic bacteria, although its role in bacterial photosynthesis is not established. It has an unusually low redox potential compared with mitochondrial cytochrome c. It is reactive with cytochrome c oxidases but not with reductases. The sequence is that of Cytochrome c-555 from Chlorobaculum tepidum (strain ATCC 49652 / DSM 12025 / NBRC 103806 / TLS) (Chlorobium tepidum).